Reading from the N-terminus, the 269-residue chain is Rhamnulose-1-phosphate aldolase (269 aa).

Residue Glu119 is part of the active site. Zn(2+) is bound by residues His142, His144, and His214.

It belongs to the aldolase class II family. RhaD subfamily. The cofactor is Zn(2+).

Its subcellular location is the cytoplasm. It catalyses the reaction L-rhamnulose 1-phosphate = (S)-lactaldehyde + dihydroxyacetone phosphate. It functions in the pathway carbohydrate degradation; L-rhamnose degradation; glycerone phosphate from L-rhamnose: step 3/3. Its function is as follows. Catalyzes the reversible cleavage of L-rhamnulose-1-phosphate to dihydroxyacetone phosphate (DHAP) and L-lactaldehyde. In Bacteroides thetaiotaomicron (strain ATCC 29148 / DSM 2079 / JCM 5827 / CCUG 10774 / NCTC 10582 / VPI-5482 / E50), this protein is Rhamnulose-1-phosphate aldolase.